A 418-amino-acid polypeptide reads, in one-letter code: Outer membrane protein assembly factor BamB (418 aa).

The first 28 residues, 1–28 (MFHNTCGRKGRFARAMGMALAISVTLSG), serve as a signal peptide directing secretion. Cysteine 29 is lipidated: N-palmitoyl cysteine. Residue cysteine 29 is the site of S-diacylglycerol cysteine attachment.

The protein belongs to the BamB family. As to quaternary structure, part of the Bam complex.

It is found in the cell outer membrane. Its function is as follows. Part of the outer membrane protein assembly complex, which is involved in assembly and insertion of beta-barrel proteins into the outer membrane. The sequence is that of Outer membrane protein assembly factor BamB from Alteromonas naphthalenivorans.